A 182-amino-acid chain; its full sequence is Interferon gamma 1 (182 aa).

A signal peptide spans 1-21 (MIAQNMTIFFWGVCLLTSGWA). The N-linked (GlcNAc...) asparagine glycan is linked to N93.

The protein belongs to the type II (or gamma) interferon family. Homodimer. In terms of tissue distribution, highly expressed in spleen. Also detected at lower levels in brain, gill, kidney, heart, intestine and muscle. In immune cell populations, has highest expression in peripheral blood leukocytes and splenocytes. Detected in kidney-derived monocytes, neutrophils, macrophages and leukocytes.

Its subcellular location is the secreted. In terms of biological role, cytokine which binds to interferon gamma receptor 1-like (ifngr1l). Has activating effects on primary macrophages and neutrophils. Induces nitric oxide production and phagocytic responses in macrophages. Primes macrophages and neutrophils for production of reactive oxygen intermediates (ROI). Stimulates phosphorylation and nuclear localization of the JAK/STAT signal transducer stat1. Promotes increased expression of a number of genes important for macrophage activity, including the interferon regulatory factors irf1, irf2, irf8 and irf9. This chain is Interferon gamma 1, found in Carassius auratus (Goldfish).